We begin with the raw amino-acid sequence, 112 residues long: UPF0102 protein Spea_0251 (112 aa).

Belongs to the UPF0102 family.

This is UPF0102 protein Spea_0251 from Shewanella pealeana (strain ATCC 700345 / ANG-SQ1).